Consider the following 365-residue polypeptide: MGAGAGGLSLRGARLSPEERANSSKSRAIDRALSKDHTDDLNRFKILLLGTAESGKSTIFRQMRVLHLDGYAKEDALEYLSIIHSNCMEALTQLVEACSAFGILHDITVQEDVDRFEGFKKKLRDPEGLVIPVVIGRCMDRVWQSSSMQMCYETRRFRFALLDSAKFMDNIVRLTEDNYVPTIQDIVHCRISTTGINEIAFNHKKMDFKMVDVGGQRSERRKWIHCFDNVDMILFIVSMSDYDQLDPEDHKYNRMKQSYEIFKTIVHCDLFRHASIVLFLNKYDVFVEKLKTSPLRRSFKSYDGDNSEESARDFIKKLFRRCITDRHKFFVFETTATDTGNIDLVFGSAVAHIVNENLRSAGLHE.

A lipid anchor (N-myristoyl glycine) is attached at Gly-2. The G-alpha domain occupies 42–364 (NRFKILLLGT…NENLRSAGLH (323 aa)). Residues 45 to 58 (KILLLGTAESGKST) are G1 motif. GTP-binding positions include 50 to 57 (GTAESGKS), 187 to 193 (VHCRIST), 212 to 216 (DVGGQ), 281 to 284 (NKYD), and Ala-336. Mg(2+) is bound by residues Ser-57 and Thr-193. The tract at residues 185–193 (DIVHCRIST) is G2 motif. The tract at residues 208–217 (FKMVDVGGQR) is G3 motif. The segment at 277-284 (VLFLNKYD) is G4 motif. The tract at residues 334–339 (TTATDT) is G5 motif.

It belongs to the G-alpha family. In terms of assembly, g proteins are composed of 3 units; alpha, beta and gamma. The alpha chain contains the guanine nucleotide binding site.

In terms of biological role, guanine nucleotide-binding proteins (G proteins) are involved as modulators or transducers in various transmembrane signaling systems. This is Guanine nucleotide-binding protein alpha-6 subunit (gpa-6) from Caenorhabditis briggsae.